A 386-amino-acid chain; its full sequence is 8-amino-7-oxononanoate synthase (386 aa).

Arg-31 contacts substrate. 109–110 (GY) is a pyridoxal 5'-phosphate binding site. Residue His-134 coordinates substrate. Pyridoxal 5'-phosphate contacts are provided by residues Ser-180, 205–208 (DEAH), and 236–239 (TLSK). Lys-239 is modified (N6-(pyridoxal phosphate)lysine). Position 349 (Thr-349) interacts with substrate.

This sequence belongs to the class-II pyridoxal-phosphate-dependent aminotransferase family. BioF subfamily. Homodimer. It depends on pyridoxal 5'-phosphate as a cofactor.

It catalyses the reaction 6-carboxyhexanoyl-[ACP] + L-alanine + H(+) = (8S)-8-amino-7-oxononanoate + holo-[ACP] + CO2. The protein operates within cofactor biosynthesis; biotin biosynthesis. In terms of biological role, catalyzes the decarboxylative condensation of pimeloyl-[acyl-carrier protein] and L-alanine to produce 8-amino-7-oxononanoate (AON), [acyl-carrier protein], and carbon dioxide. This Mycobacterium bovis (strain ATCC BAA-935 / AF2122/97) protein is 8-amino-7-oxononanoate synthase.